The chain runs to 132 residues: Phosphoribosyl-AMP cyclohydrolase (132 aa).

Residue D79 coordinates Mg(2+). Zn(2+) is bound at residue C80. Residues D81 and D83 each contribute to the Mg(2+) site. Zn(2+)-binding residues include C100 and C107.

This sequence belongs to the PRA-CH family. As to quaternary structure, homodimer. Requires Mg(2+) as cofactor. The cofactor is Zn(2+).

It is found in the cytoplasm. The catalysed reaction is 1-(5-phospho-beta-D-ribosyl)-5'-AMP + H2O = 1-(5-phospho-beta-D-ribosyl)-5-[(5-phospho-beta-D-ribosylamino)methylideneamino]imidazole-4-carboxamide. It participates in amino-acid biosynthesis; L-histidine biosynthesis; L-histidine from 5-phospho-alpha-D-ribose 1-diphosphate: step 3/9. Catalyzes the hydrolysis of the adenine ring of phosphoribosyl-AMP. This Delftia acidovorans (strain DSM 14801 / SPH-1) protein is Phosphoribosyl-AMP cyclohydrolase.